The primary structure comprises 344 residues: Heat-inducible transcription repressor HrcA (344 aa).

This sequence belongs to the HrcA family.

In terms of biological role, negative regulator of class I heat shock genes (grpE-dnaK-dnaJ and groELS operons). Prevents heat-shock induction of these operons. In Geobacillus kaustophilus (strain HTA426), this protein is Heat-inducible transcription repressor HrcA.